A 103-amino-acid chain; its full sequence is Small ribosomal subunit protein uS10 (103 aa).

It belongs to the universal ribosomal protein uS10 family. In terms of assembly, part of the 30S ribosomal subunit.

Involved in the binding of tRNA to the ribosomes. This Pelodictyon phaeoclathratiforme (strain DSM 5477 / BU-1) protein is Small ribosomal subunit protein uS10.